The following is a 339-amino-acid chain: Protein RETICULATA-RELATED 2, chloroplastic (339 aa).

Residues 1–58 (MAAMAAKLHISTKSDQSNVRLPRLINLSRDPTARVLFPRNGSVSSLHTNFSSPNIMVP) constitute a chloroplast transit peptide. Residues 68–86 (IGNHGGGSGSGGGGGGYGG) show a composition bias toward gly residues. The segment at 68 to 92 (IGNHGGGSGSGGGGGGYGGSEEEES) is disordered. Helical transmembrane passes span 148–168 (FVFS…YLLA) and 213–233 (VFAT…NGLI).

This sequence belongs to the RETICULATA family.

It is found in the plastid. The protein localises to the chloroplast membrane. May play a role in leaf development. The sequence is that of Protein RETICULATA-RELATED 2, chloroplastic from Arabidopsis thaliana (Mouse-ear cress).